We begin with the raw amino-acid sequence, 106 residues long: UPF0145 protein Pfl01_1745 (106 aa).

It belongs to the UPF0145 family.

This chain is UPF0145 protein Pfl01_1745, found in Pseudomonas fluorescens (strain Pf0-1).